The sequence spans 432 residues: Serine hydroxymethyltransferase (432 aa).

(6S)-5,6,7,8-tetrahydrofolate-binding positions include L127 and 131–133; that span reads GHL. K236 is modified (N6-(pyridoxal phosphate)lysine).

The protein belongs to the SHMT family. As to quaternary structure, homodimer. Pyridoxal 5'-phosphate is required as a cofactor.

Its subcellular location is the cytoplasm. The enzyme catalyses (6R)-5,10-methylene-5,6,7,8-tetrahydrofolate + glycine + H2O = (6S)-5,6,7,8-tetrahydrofolate + L-serine. It functions in the pathway one-carbon metabolism; tetrahydrofolate interconversion. Its pathway is amino-acid biosynthesis; glycine biosynthesis; glycine from L-serine: step 1/1. In terms of biological role, catalyzes the reversible interconversion of serine and glycine with tetrahydrofolate (THF) serving as the one-carbon carrier. This reaction serves as the major source of one-carbon groups required for the biosynthesis of purines, thymidylate, methionine, and other important biomolecules. Also exhibits THF-independent aldolase activity toward beta-hydroxyamino acids, producing glycine and aldehydes, via a retro-aldol mechanism. The sequence is that of Serine hydroxymethyltransferase from Rhizobium rhizogenes (strain K84 / ATCC BAA-868) (Agrobacterium radiobacter).